The following is a 94-amino-acid chain: Acylphosphatase (94 aa).

An Acylphosphatase-like domain is found at 8–94; the sequence is ALHVIVKGRV…RGYTDFRIEV (87 aa). Active-site residues include R23 and N41.

This sequence belongs to the acylphosphatase family.

It carries out the reaction an acyl phosphate + H2O = a carboxylate + phosphate + H(+). This Treponema denticola (strain ATCC 35405 / DSM 14222 / CIP 103919 / JCM 8153 / KCTC 15104) protein is Acylphosphatase (acyP).